We begin with the raw amino-acid sequence, 504 residues long: Maturase K (504 aa).

It belongs to the intron maturase 2 family. MatK subfamily.

It localises to the plastid. It is found in the chloroplast. Usually encoded in the trnK tRNA gene intron. Probably assists in splicing its own and other chloroplast group II introns. The protein is Maturase K of Pachira aquatica (Guiana chestnut).